Reading from the N-terminus, the 450-residue chain is Eukaryotic translation initiation factor 3 subunit E (450 aa).

The PCI domain maps to Thr-255–Gln-424.

This sequence belongs to the eIF-3 subunit E family. As to quaternary structure, component of the eukaryotic translation initiation factor 3 (eIF-3) complex.

It localises to the cytoplasm. Its function is as follows. Component of the eukaryotic translation initiation factor 3 (eIF-3) complex, which is involved in protein synthesis of a specialized repertoire of mRNAs and, together with other initiation factors, stimulates binding of mRNA and methionyl-tRNAi to the 40S ribosome. The eIF-3 complex specifically targets and initiates translation of a subset of mRNAs involved in cell proliferation. The chain is Eukaryotic translation initiation factor 3 subunit E (int6) from Aspergillus clavatus (strain ATCC 1007 / CBS 513.65 / DSM 816 / NCTC 3887 / NRRL 1 / QM 1276 / 107).